We begin with the raw amino-acid sequence, 377 residues long: Prostaglandin E synthase 2 (377 aa).

The Lumenal segment spans residues 1 to 57 (MDPAARVVRALWPGGCALAWRLGGRPQPLLPTQSRAGFAGAAGGPSPVAAARKGSPR). A helical transmembrane segment spans residues 58 to 74 (LLGAAALALGGALGLYH). Topologically, residues 75 to 377 (TARWHLRAQD…RAITEASPAH (303 aa)) are cytoplasmic. Residues 90-193 (SAAQLSLSSR…EIITYYPAMK (104 aa)) enclose the Glutaredoxin domain. Ser-95 carries the phosphoserine modification. Residues Val-148 and 164 to 165 (DS) contribute to the glutathione site. Residues 263 to 377 (YIVREGKFGA…RAITEASPAH (115 aa)) enclose the GST C-terminal domain.

Belongs to the GST superfamily. In terms of assembly, homodimer. May interact with CEBPB. Interacts with EXOSC10. Post-translationally, synthesized as a Golgi membrane-associated protein, and the proteolytic removal of the N-terminal hydrophobic domain leads to the formation of a mature cytosolic enzyme. In terms of tissue distribution, widely expressed. Expressed in the heart, including apex, inter-ventricular septum, both atria and ventricles, but not in the aorta. Also expressed in fetal heart. Detected in various regions of the brain: cerebellum; occipital, frontal and parietal lobes. Also expressed in the lymph nodes, skeletal muscle, kidney and trachea, but not in the thymus or lung. Overexpressed in colorectal cancer.

The protein localises to the golgi apparatus membrane. The protein resides in the cytoplasm. It is found in the perinuclear region. The catalysed reaction is prostaglandin H2 = prostaglandin E2. It catalyses the reaction prostaglandin H2 = (12S)-hydroxy-(5Z,8E,10E)-heptadecatrienoate + malonaldehyde. The protein operates within lipid metabolism; prostaglandin biosynthesis. Its activity is regulated as follows. Isomerase activity is increased by sulfhydril compounds. Dithiothreitol (DTT) is most effective, followed by dihydrolipoic acid, glutathione (GSH) and 2-mercaptoethanol. In terms of biological role, isomerase that catalyzes the conversion of PGH2 into the more stable prostaglandin E2 (PGE2) (in vitro). The biological function and the GSH-dependent property of PTGES2 is still under debate. In vivo, PTGES2 could form a complex with GSH and heme and would not participate in PGE2 synthesis but would catalyze the degradation of prostaglandin E2 H2 (PGH2) to 12(S)-hydroxy-5(Z),8(E),10(E)-heptadecatrienoic acid (HHT) and malondialdehyde (MDA). The chain is Prostaglandin E synthase 2 (PTGES2) from Homo sapiens (Human).